The chain runs to 446 residues: Exodeoxyribonuclease 7 large subunit (446 aa).

This sequence belongs to the XseA family. In terms of assembly, heterooligomer composed of large and small subunits.

The protein localises to the cytoplasm. The catalysed reaction is Exonucleolytic cleavage in either 5'- to 3'- or 3'- to 5'-direction to yield nucleoside 5'-phosphates.. In terms of biological role, bidirectionally degrades single-stranded DNA into large acid-insoluble oligonucleotides, which are then degraded further into small acid-soluble oligonucleotides. The polypeptide is Exodeoxyribonuclease 7 large subunit (Streptococcus pneumoniae (strain Taiwan19F-14)).